We begin with the raw amino-acid sequence, 313 residues long: N-acetyl-gamma-glutamyl-phosphate reductase (313 aa).

Cys117 is an active-site residue.

It belongs to the NAGSA dehydrogenase family. Type 2 subfamily.

It is found in the cytoplasm. The enzyme catalyses N-acetyl-L-glutamate 5-semialdehyde + phosphate + NADP(+) = N-acetyl-L-glutamyl 5-phosphate + NADPH + H(+). Its pathway is amino-acid biosynthesis; L-arginine biosynthesis; N(2)-acetyl-L-ornithine from L-glutamate: step 3/4. Its function is as follows. Catalyzes the NADPH-dependent reduction of N-acetyl-5-glutamyl phosphate to yield N-acetyl-L-glutamate 5-semialdehyde. The sequence is that of N-acetyl-gamma-glutamyl-phosphate reductase from Burkholderia orbicola (strain MC0-3).